Reading from the N-terminus, the 331-residue chain is Major ferric iron-binding protein (331 aa).

Residues 1 to 22 (MKTSIRYALLAAALTAATPALA) form the signal peptide. Fe cation-binding residues include His31, Glu79, Tyr217, and Tyr218.

It belongs to the bacterial solute-binding protein 1 family.

Its subcellular location is the periplasm. This protein may be a central component in the iron-acquisition system. The chain is Major ferric iron-binding protein (fbpA) from Neisseria meningitidis serogroup B (strain ATCC BAA-335 / MC58).